Consider the following 360-residue polypeptide: Terpene synthase 5 (360 aa).

The DDxx(x)D/E motif motif lies at 87–92 (DDFLER). Residues 237–245 (NDCVSYAKE) carry the NDxxSxxxD/E motif motif.

The protein belongs to the terpene synthase family.

Its function is as follows. Terpene synthase that converts its substrate farnesyl diphosphate (FPP) into 2 yet unidentified sesquiterpenes. This Dictyostelium purpureum (Slime mold) protein is Terpene synthase 5.